The following is a 383-amino-acid chain: Chaperone protein DnaJ (383 aa).

In terms of domain architecture, J spans 4-68 (DLYETLNVSR…DQRARYDRFG (65 aa)). Residues 139–221 (GGEKEITINH…CSGRGRNQKQ (83 aa)) form a CR-type zinc finger. Zn(2+)-binding residues include cysteine 152, cysteine 155, cysteine 169, cysteine 172, cysteine 195, cysteine 198, cysteine 209, and cysteine 212. 4 CXXCXGXG motif repeats span residues 152 to 159 (CETCRGSG), 169 to 176 (CRNCGGQG), 195 to 202 (CPNCQGTG), and 209 to 216 (CPTCSGRG).

This sequence belongs to the DnaJ family. As to quaternary structure, homodimer. Requires Zn(2+) as cofactor.

The protein localises to the cytoplasm. Participates actively in the response to hyperosmotic and heat shock by preventing the aggregation of stress-denatured proteins and by disaggregating proteins, also in an autonomous, DnaK-independent fashion. Unfolded proteins bind initially to DnaJ; upon interaction with the DnaJ-bound protein, DnaK hydrolyzes its bound ATP, resulting in the formation of a stable complex. GrpE releases ADP from DnaK; ATP binding to DnaK triggers the release of the substrate protein, thus completing the reaction cycle. Several rounds of ATP-dependent interactions between DnaJ, DnaK and GrpE are required for fully efficient folding. Also involved, together with DnaK and GrpE, in the DNA replication of plasmids through activation of initiation proteins. The polypeptide is Chaperone protein DnaJ (Gloeobacter violaceus (strain ATCC 29082 / PCC 7421)).